Here is a 982-residue protein sequence, read N- to C-terminus: Glutamate [NMDA] receptor subunit 1 (982 aa).

The N-terminal stretch at 1-22 (MRVAFIYRWLLCGAAIVNVLVA) is a signal peptide. At 23-568 (QRHTASDNPS…TLVSFLQPFS (546 aa)) the chain is on the extracellular side. Residues asparagine 253, asparagine 309, asparagine 340, asparagine 392, asparagine 449, asparagine 476, and asparagine 496 are each glycosylated (N-linked (GlcNAc...) asparagine). Residues 525–527 (PLT) and arginine 532 each bind glycine. Residues 569–589 (NTLWILVMVSVHVVALVLYLL) form a helical membrane-spanning segment. The Cytoplasmic portion of the chain corresponds to 590 to 646 (DRFSPFGRFKLSHSDSNEEKALNLSSAVWFAWGVLLNSGIGEGTPRSFSARVLGMVW). Residues 647 to 667 (AGFAMIIVASYTANLAAFLVL) traverse the membrane as a helical segment. Residues 668 to 826 (ERPKTKLSGI…KTPNTLGLKN (159 aa)) lie on the Extracellular side of the membrane. Residue asparagine 688 is glycosylated (N-linked (GlcNAc...) asparagine). Glycine contacts are provided by serine 698 and aspartate 742. Residues 827–847 (MAGVFILVGVGIAGGVGLIII) traverse the membrane as a helical segment. At 848 to 982 (EVIYKKHQVK…YTSDVSHLVV (135 aa)) the chain is on the cytoplasmic side. The tract at residues 948 to 982 (LTASQLGLGKTRPQQNPLPPRYSPGYTSDVSHLVV) is disordered. Polar residues predominate over residues 972–982 (GYTSDVSHLVV).

The protein belongs to the glutamate-gated ion channel (TC 1.A.10.1) family. In terms of assembly, forms a heteromeric NMDA channel with Nmdar2.

The protein localises to the cell membrane. It is found in the postsynaptic cell membrane. It localises to the postsynaptic density. Its function is as follows. NMDA receptor subtype of glutamate-gated ion channels with high calcium permeability and voltage-dependent sensitivity to magnesium. Mediated by glycine. This protein plays a key role in synaptic plasticity, synaptogenesis, excitotoxicity, memory acquisition and learning. It mediates neuronal functions in glutamate neurotransmission. Is involved in the cell surface targeting of NMDA receptors. Plays a role in associative learning and in long-term memory consolidation. The sequence is that of Glutamate [NMDA] receptor subunit 1 from Drosophila grimshawi (Hawaiian fruit fly).